The following is a 105-amino-acid chain: MTMMITTGNSFEGKVIKQYLGIVRGIVVRSPTISQGLMGGLKSIVGGKIGAYSQMCEHAREEAFQLMIEHAQALNANGIIAMRYDTGEIGQAGTEVLCYGTAVII.

This sequence belongs to the UPF0145 family.

The sequence is that of UPF0145 protein LPC_0273 from Legionella pneumophila (strain Corby).